The primary structure comprises 120 residues: BolA-like protein 2 (120 aa).

Belongs to the BolA/IbaG family. In terms of assembly, interacts with FRA1, GRX3 and GRX4.

The protein resides in the cytoplasm. It localises to the nucleus. In terms of biological role, involved in the regulation of the iron regulon in response to decreased mitochondrial iron-sulfur cluster synthesis. May be involved in mitochondrial organization and biogenesis. In Saccharomyces cerevisiae (strain ATCC 204508 / S288c) (Baker's yeast), this protein is BolA-like protein 2 (BOL2).